Here is a 229-residue protein sequence, read N- to C-terminus: Calcyclin-binding protein (229 aa).

At Ala2 the chain carries N-acetylalanine. The tract at residues 2–81 is interaction with SIAH1; the sequence is ASALEELQKD…YTVKISNYGW (80 aa). A Phosphoserine modification is found at Ser3. N6-acetyllysine is present on residues Lys10 and Lys21. Ser36 bears the Phosphoserine mark. A disordered region spans residues 38-59; it reads IETELRNKMQQKSQKKPEFDNE. The CS domain occupies 74–168; the sequence is VKISNYGWDQ…AENTRWDYLT (95 aa). The segment at 74 to 229 is interaction with SKP1; it reads VKISNYGWDQ…EKQAREDTEF (156 aa). N6-acetyllysine is present on residues Lys86 and Lys119. The tract at residues 155-229 is interaction with S100A6; the sequence is CRKKAENTRW…EKQAREDTEF (75 aa). The SGS domain occupies 169–229; that stretch reads QVEKECKEKE…EKQAREDTEF (61 aa).

In terms of assembly, component of some large E3 complex at least composed of UBE2D1, SIAH1, CACYBP/SIP, SKP1, APC and TBL1X. Interacts directly with SIAH1, SIAH2 and SKP1. Interacts with protein of the S100 family S100A1, S100A6, S100B, S100P and S100A12 in a calcium-dependent manner. Phosphorylated on serine residues. Phosphorylated upon induction by RA or at high calcium concentrations.

The protein resides in the nucleus. It localises to the cytoplasm. Functionally, may be involved in calcium-dependent ubiquitination and subsequent proteasomal degradation of target proteins. Probably serves as a molecular bridge in ubiquitin E3 complexes. Participates in the ubiquitin-mediated degradation of beta-catenin (CTNNB1). The sequence is that of Calcyclin-binding protein (Cacybp) from Rattus norvegicus (Rat).